The primary structure comprises 784 residues: DNA repair and recombination protein RAD54-like (784 aa).

The segment at 1–50 (MRRSLAPSQRGPLRPESRHSFTPPLLKKNKRSCQQELEREQELDRKRQSA) is disordered. Residues 2–9 (RRSLAPSQ) form a required for chromatin remodeling, strand pairing activities and coupling of ATPase activity region. Phosphoserine is present on Ser-20. Thr-22 is subject to Phosphothreonine. A compositionally biased stretch (basic and acidic residues) spans 36 to 47 (ELEREQELDRKR). Residues 172–346 (EGKRGNFNGC…YSLVNFVNPE (175 aa)) enclose the Helicase ATP-binding domain. Position 185 to 192 (185 to 192 (DEMGLGKT)) interacts with ATP. Residues 297 to 300 (DEGH) carry the DEGH box motif. One can recognise a Helicase C-terminal domain in the interval 503–660 (LLDFMLAAIR…NNESAEKHFT (158 aa)). Residues 747–756 (VASAEEAASE) are compositionally biased toward low complexity. A disordered region spans residues 747–784 (VASAEEAASEQPEEKPDRRKRPSTPLSDDSADEDFLGF). Over residues 775-784 (DSADEDFLGF) the composition is skewed to acidic residues.

The protein belongs to the SNF2/RAD54 helicase family. As to quaternary structure, interacts (via N-terminus) with spn-A/Rad51.

The protein localises to the nucleus. In terms of biological role, involved in mitotic DNA repair and meiotic recombination. Functions in the recombinational DNA repair pathway. Essential for interhomolog gene conversion (GC), but may have a less important role in intersister GC than spn-A/Rad51. In the presence of DNA, spn-A/Rad51 enhances the ATPase activity of okr/Rad54. This chain is DNA repair and recombination protein RAD54-like, found in Drosophila erecta (Fruit fly).